A 96-amino-acid polypeptide reads, in one-letter code: Secretoglobin family 2B member 2 (96 aa).

The first 23 residues, 1-23 (MRVTSATCALLLALICSVQLGDA), serve as a signal peptide directing secretion.

This sequence belongs to the secretoglobin family.

The protein localises to the secreted. The chain is Secretoglobin family 2B member 2 (SCGB2B2) from Homo sapiens (Human).